We begin with the raw amino-acid sequence, 502 residues long: Lysine--tRNA ligase (502 aa).

The Mg(2+) site is built by Glu403 and Glu410.

Belongs to the class-II aminoacyl-tRNA synthetase family. Homodimer. The cofactor is Mg(2+).

The protein localises to the cytoplasm. It catalyses the reaction tRNA(Lys) + L-lysine + ATP = L-lysyl-tRNA(Lys) + AMP + diphosphate. In Synechococcus sp. (strain CC9605), this protein is Lysine--tRNA ligase.